The chain runs to 334 residues: Ribosomal RNA small subunit methyltransferase H (334 aa).

The disordered stretch occupies residues methionine 1–threonine 21. S-adenosyl-L-methionine-binding positions include glycine 52–tyrosine 54, aspartate 71, phenylalanine 98, aspartate 119, and glutamine 126.

It belongs to the methyltransferase superfamily. RsmH family.

Its subcellular location is the cytoplasm. It carries out the reaction cytidine(1402) in 16S rRNA + S-adenosyl-L-methionine = N(4)-methylcytidine(1402) in 16S rRNA + S-adenosyl-L-homocysteine + H(+). In terms of biological role, specifically methylates the N4 position of cytidine in position 1402 (C1402) of 16S rRNA. This is Ribosomal RNA small subunit methyltransferase H from Granulibacter bethesdensis (strain ATCC BAA-1260 / CGDNIH1).